The following is a 246-amino-acid chain: Probable transcriptional regulatory protein CLB_3102 (246 aa).

It belongs to the TACO1 family.

The protein resides in the cytoplasm. The sequence is that of Probable transcriptional regulatory protein CLB_3102 from Clostridium botulinum (strain ATCC 19397 / Type A).